We begin with the raw amino-acid sequence, 190 residues long: Translation initiation factor IF-3 (190 aa).

Positions glutamine 159–glutamate 190 are disordered.

It belongs to the IF-3 family. In terms of assembly, monomer.

The protein localises to the cytoplasm. Its function is as follows. IF-3 binds to the 30S ribosomal subunit and shifts the equilibrium between 70S ribosomes and their 50S and 30S subunits in favor of the free subunits, thus enhancing the availability of 30S subunits on which protein synthesis initiation begins. This Prochlorococcus marinus (strain MIT 9215) protein is Translation initiation factor IF-3.